A 466-amino-acid chain; its full sequence is Adenosylhomocysteinase (466 aa).

3 residues coordinate substrate: Thr57, Asp132, and Glu192. 193–195 (TTT) serves as a coordination point for NAD(+). Lys222 and Asp226 together coordinate substrate. Residues Asn227, 256 to 261 (GYGDVG), Glu279, Asn314, 335 to 337 (IGH), and Asn380 contribute to the NAD(+) site.

It belongs to the adenosylhomocysteinase family. The cofactor is NAD(+).

The protein localises to the cytoplasm. It carries out the reaction S-adenosyl-L-homocysteine + H2O = L-homocysteine + adenosine. Its pathway is amino-acid biosynthesis; L-homocysteine biosynthesis; L-homocysteine from S-adenosyl-L-homocysteine: step 1/1. Its function is as follows. May play a key role in the regulation of the intracellular concentration of adenosylhomocysteine. The protein is Adenosylhomocysteinase of Brucella melitensis biotype 2 (strain ATCC 23457).